We begin with the raw amino-acid sequence, 167 residues long: ATP synthase subunit b (167 aa).

A helical membrane pass occupies residues 15-37 (FWQTVIFLVTLYLLSKFAWGPIM).

The protein belongs to the ATPase B chain family. F-type ATPases have 2 components, F(1) - the catalytic core - and F(0) - the membrane proton channel. F(1) has five subunits: alpha(3), beta(3), gamma(1), delta(1), epsilon(1). F(0) has three main subunits: a(1), b(2) and c(10-14). The alpha and beta chains form an alternating ring which encloses part of the gamma chain. F(1) is attached to F(0) by a central stalk formed by the gamma and epsilon chains, while a peripheral stalk is formed by the delta and b chains.

The protein resides in the cell inner membrane. Functionally, f(1)F(0) ATP synthase produces ATP from ADP in the presence of a proton or sodium gradient. F-type ATPases consist of two structural domains, F(1) containing the extramembraneous catalytic core and F(0) containing the membrane proton channel, linked together by a central stalk and a peripheral stalk. During catalysis, ATP synthesis in the catalytic domain of F(1) is coupled via a rotary mechanism of the central stalk subunits to proton translocation. In terms of biological role, component of the F(0) channel, it forms part of the peripheral stalk, linking F(1) to F(0). This chain is ATP synthase subunit b, found in Cytophaga hutchinsonii (strain ATCC 33406 / DSM 1761 / CIP 103989 / NBRC 15051 / NCIMB 9469 / D465).